The following is a 335-amino-acid chain: 3-hydroxyproline 2-epimerase (335 aa).

Catalysis depends on C91, which acts as the Proton acceptor. Residues 92–93, D251, and 256–257 contribute to the substrate site; these read GH and GS.

Belongs to the proline racemase family.

It carries out the reaction trans-3-hydroxy-L-proline = cis-3-hydroxy-D-proline. The catalysed reaction is trans-4-hydroxy-L-proline = cis-4-hydroxy-D-proline. In terms of biological role, catalyzes the epimerization of trans-3-hydroxy-L-proline (t3LHyp) to cis-3-hydroxy-D-proline (c3DHyp) in vitro. Can also catalyze the epimerization of trans-4-hydroxy-L-proline (t3LHyp) to cis-4-hydroxy-D-proline (c4DHyp), albeit with 3.6-fold lower efficiency. Displays no proline racemase activity. This Burkholderia multivorans (strain ATCC 17616 / 249) protein is 3-hydroxyproline 2-epimerase.